We begin with the raw amino-acid sequence, 901 residues long: Protein translocase subunit SecA (901 aa).

ATP is bound by residues Gln-87, 105–109 (GEGKT), and Asp-512. The Zn(2+) site is built by Cys-885, Cys-887, Cys-896, and His-897.

This sequence belongs to the SecA family. In terms of assembly, monomer and homodimer. Part of the essential Sec protein translocation apparatus which comprises SecA, SecYEG and auxiliary proteins SecDF-YajC and YidC. Requires Zn(2+) as cofactor.

It is found in the cell inner membrane. The protein resides in the cytoplasm. The catalysed reaction is ATP + H2O + cellular proteinSide 1 = ADP + phosphate + cellular proteinSide 2.. In terms of biological role, part of the Sec protein translocase complex. Interacts with the SecYEG preprotein conducting channel. Has a central role in coupling the hydrolysis of ATP to the transfer of proteins into and across the cell membrane, serving both as a receptor for the preprotein-SecB complex and as an ATP-driven molecular motor driving the stepwise translocation of polypeptide chains across the membrane. The polypeptide is Protein translocase subunit SecA (Salmonella enteritidis PT4 (strain P125109)).